We begin with the raw amino-acid sequence, 418 residues long: UDP-N-acetyl-D-mannosamine dehydrogenase (418 aa).

Y10, I11, D30, T85, and T119 together coordinate NAD(+). Residues R152, V153, K204, N208, R211, H242, R244, T249, and G255 each contribute to the UDP-N-acetyl-alpha-D-mannosaminouronate site. K204 serves as the catalytic Proton donor/acceptor. Residue C258 is the Nucleophile of the active site. Residue K261 participates in NAD(+) binding. Y318 and K319 together coordinate UDP-N-acetyl-alpha-D-mannosaminouronate. R326 provides a ligand contact to NAD(+). R398 is a UDP-N-acetyl-alpha-D-mannosaminouronate binding site.

This sequence belongs to the UDP-glucose/GDP-mannose dehydrogenase family. As to quaternary structure, homodimer.

It catalyses the reaction UDP-N-acetyl-alpha-D-mannosamine + 2 NAD(+) + H2O = UDP-N-acetyl-alpha-D-mannosaminouronate + 2 NADH + 3 H(+). Catalyzes the four-electron oxidation of UDP-N-acetyl-D-mannosamine (UDP-ManNAc), reducing NAD(+) and releasing UDP-N-acetylmannosaminuronic acid (UDP-ManNAcA). The polypeptide is UDP-N-acetyl-D-mannosamine dehydrogenase (Pyrococcus horikoshii (strain ATCC 700860 / DSM 12428 / JCM 9974 / NBRC 100139 / OT-3)).